A 139-amino-acid chain; its full sequence is Small ribosomal subunit protein uS12m (139 aa).

Residues 1-29 constitute a mitochondrion transit peptide; the sequence is MSWSGLLRGLSMSLNYGLALAPRPWGTRP. The tract at residues 37-57 is disordered; sequence HRRGPPKFPPSKPGPTEGRPQ.

It belongs to the universal ribosomal protein uS12 family. Component of the mitochondrial ribosome small subunit (28S) which comprises a 12S rRNA and about 30 distinct proteins.

It is found in the mitochondrion. In Bos taurus (Bovine), this protein is Small ribosomal subunit protein uS12m (MRPS12).